The sequence spans 654 residues: Acetyl-coenzyme A synthetase (654 aa).

Residues 191-194 (RRGQ) and Thr315 contribute to the CoA site. ATP-binding positions include 391–393 (GEP), 415–420 (DTWWQT), Asp506, and Arg521. Ser529 lines the CoA pocket. Residue Arg532 coordinates ATP. Residues Val543, His545, and Val548 each contribute to the Mg(2+) site. At Lys615 the chain carries N6-acetyllysine.

This sequence belongs to the ATP-dependent AMP-binding enzyme family. Requires Mg(2+) as cofactor. Acetylated. Deacetylation by the SIR2-homolog deacetylase activates the enzyme.

The catalysed reaction is acetate + ATP + CoA = acetyl-CoA + AMP + diphosphate. Catalyzes the conversion of acetate into acetyl-CoA (AcCoA), an essential intermediate at the junction of anabolic and catabolic pathways. AcsA undergoes a two-step reaction. In the first half reaction, AcsA combines acetate with ATP to form acetyl-adenylate (AcAMP) intermediate. In the second half reaction, it can then transfer the acetyl group from AcAMP to the sulfhydryl group of CoA, forming the product AcCoA. This is Acetyl-coenzyme A synthetase from Gemmatimonas aurantiaca (strain DSM 14586 / JCM 11422 / NBRC 100505 / T-27).